We begin with the raw amino-acid sequence, 1272 residues long: Vitamin B12-dependent ribonucleotide reductase (1272 aa).

Residues serine 153, 198–199 (AC), glycine 230, 474–478 (NPCSE), and 675–679 (PTGTI) each bind substrate. Cysteine 199 and cysteine 487 are oxidised to a cystine. Asparagine 474 serves as the catalytic Proton acceptor. Residue cysteine 476 is the Cysteine radical intermediate of the active site. Catalysis depends on glutamate 478, which acts as the Proton acceptor. The segment at 1120–1147 (TLVSSNEGDRAASEPKGSATAAPARGSA) is disordered.

It belongs to the ribonucleoside diphosphate reductase class-2 family. Adenosylcob(III)alamin is required as a cofactor.

The catalysed reaction is a 2'-deoxyribonucleoside 5'-diphosphate + [thioredoxin]-disulfide + H2O = a ribonucleoside 5'-diphosphate + [thioredoxin]-dithiol. Its function is as follows. Catalyzes the reduction of ribonucleotides to deoxyribonucleotides. May function to provide a pool of deoxyribonucleotide precursors for DNA repair during oxygen limitation and/or for immediate growth after restoration of oxygen. The polypeptide is Vitamin B12-dependent ribonucleotide reductase (nrdJ) (Agrobacterium fabrum (strain C58 / ATCC 33970) (Agrobacterium tumefaciens (strain C58))).